Consider the following 77-residue polypeptide: Exodeoxyribonuclease 7 small subunit (77 aa).

It belongs to the XseB family. As to quaternary structure, heterooligomer composed of large and small subunits.

It localises to the cytoplasm. The catalysed reaction is Exonucleolytic cleavage in either 5'- to 3'- or 3'- to 5'-direction to yield nucleoside 5'-phosphates.. In terms of biological role, bidirectionally degrades single-stranded DNA into large acid-insoluble oligonucleotides, which are then degraded further into small acid-soluble oligonucleotides. This chain is Exodeoxyribonuclease 7 small subunit, found in Trichlorobacter lovleyi (strain ATCC BAA-1151 / DSM 17278 / SZ) (Geobacter lovleyi).